The chain runs to 291 residues: Protein US2 (291 aa).

An N-acetylglycine; by host modification is found at Gly-2. Residues 223 to 281 form a disordered region; sequence NKPRPASSRPHPATHPTQRPCFTCMGRPEIPDEPSWQTGDDDPQNPGPPLAVGDEWPPS.

The protein belongs to the herpesviridae HHV-1 US2 protein family. In terms of assembly, interacts with host KRT18. Interacts with host MAP3K7; this interaction induces host NF-kappa-B pathway.

The protein localises to the virion. It is found in the host cytoplasm. The protein resides in the host cell surface. It localises to the host nucleus. Plays a role in the activation of the host NF-kappa-B pathway by interacting with and thus activating the component MAP3K7. The chain is Protein US2 from Human herpesvirus 2 (strain HG52) (HHV-2).